A 253-amino-acid chain; its full sequence is Tryptophan synthase alpha chain (253 aa).

Residues Glu-46 and Asp-57 each act as proton acceptor in the active site.

This sequence belongs to the TrpA family. In terms of assembly, tetramer of two alpha and two beta chains.

It carries out the reaction (1S,2R)-1-C-(indol-3-yl)glycerol 3-phosphate + L-serine = D-glyceraldehyde 3-phosphate + L-tryptophan + H2O. It participates in amino-acid biosynthesis; L-tryptophan biosynthesis; L-tryptophan from chorismate: step 5/5. Functionally, the alpha subunit is responsible for the aldol cleavage of indoleglycerol phosphate to indole and glyceraldehyde 3-phosphate. This is Tryptophan synthase alpha chain from Dictyoglomus turgidum (strain DSM 6724 / Z-1310).